Reading from the N-terminus, the 152-residue chain is Sulfur-rich protein (152 aa).

The tract at residues 1–20 (MSTVPVVQGAGSSNSAQDIS) is disordered. A run of 2 helical transmembrane segments spans residues 43–63 (VGLV…LVSA) and 69–89 (AIYL…VGIL).

Its subcellular location is the membrane. This Chlamydia trachomatis serovar A (strain ATCC VR-571B / DSM 19440 / HAR-13) protein is Sulfur-rich protein (srp).